A 290-amino-acid polypeptide reads, in one-letter code: MTMIKLEQIFWHVWINGDLVPYQFARIHVLTHSLHYSGSVFEGERAYNGKVFKLKEHTERLIKSAEALGLKVPYSVDEIIKAHELVIKQNNIKDAYIRPLIWCGDESLNITNPDLSTNLLIAGIPSMPRSFEKGINLHVGRWRKAIPDSTPVQSKSAAQYNMAITSKKEAKALGYDDALLLDYEGYIAECTTTNIFFVKDKTLYTPIADRFLNGITRQTIIEIAKDLGLEVKEERLKLEQIENFTGCFVTGTAIEVQNIDSIDLGNKKITFDDHQIADRLKKEYGRIVRE.

At lysine 155 the chain carries N6-(pyridoxal phosphate)lysine.

It belongs to the class-IV pyridoxal-phosphate-dependent aminotransferase family. Pyridoxal 5'-phosphate is required as a cofactor.

The enzyme catalyses L-leucine + 2-oxoglutarate = 4-methyl-2-oxopentanoate + L-glutamate. It carries out the reaction L-isoleucine + 2-oxoglutarate = (S)-3-methyl-2-oxopentanoate + L-glutamate. The catalysed reaction is L-valine + 2-oxoglutarate = 3-methyl-2-oxobutanoate + L-glutamate. It functions in the pathway amino-acid biosynthesis; L-isoleucine biosynthesis; L-isoleucine from 2-oxobutanoate: step 4/4. It participates in amino-acid biosynthesis; L-leucine biosynthesis; L-leucine from 3-methyl-2-oxobutanoate: step 4/4. The protein operates within amino-acid biosynthesis; L-valine biosynthesis; L-valine from pyruvate: step 4/4. Acts on leucine, isoleucine and valine. The protein is Probable branched-chain-amino-acid aminotransferase (ilvE) of Rickettsia felis (strain ATCC VR-1525 / URRWXCal2) (Rickettsia azadi).